The sequence spans 351 residues: MNKFYYICIYINILYVCVSGHGYMTFPIARQRRCSVRGGQWWPPNGDGITDTMCRAAYQNVYNKVLNQYNDPQEAATAAQYMFQQDNEYAALAGPDYTNLCNLQQNVVPNNLCAAGADDWDVVPFGDKSGMDLPGNWVPTVIPLDSNHQSSVALELEFCPTAVHDPSYYEVYITNSGFNVHTDNVVWGNLELIFNDTVPLRPKSSTSTCNANPNVYRFTVSIPVRPAQFVLYVRWQRIDPVGEGFYNCVDMAFDYAAGPSEEDVIYPDYEAPGQNAYTCHANRNKYGGNYENTIDEDKYQAQLDESIKSRYDKYSRHKGGKFGQKQCNGNKHHYNKYTKYYNQNYKNNKNY.

An N-terminal signal peptide occupies residues 1–20 (MNKFYYICIYINILYVCVSG).

As to quaternary structure, homodimer; disulfide-linked.

This protein is a spindle body protein. The polypeptide is Spindolin (Lepidoptera (butterflies and moths)).